Reading from the N-terminus, the 2424-residue chain is Voltage-dependent P/Q-type calcium channel subunit alpha-1A (2424 aa).

The Cytoplasmic segment spans residues 1–98 (MARFGDEMPA…KYAKKITEWP (98 aa)). An I repeat occupies 85–363 (NVVRKYAKKI…LVLGVLSGEF (279 aa)). A helical membrane pass occupies residues 99 to 117 (PFEYMILATIIANCIVLAL). The Extracellular portion of the chain corresponds to 118 to 135 (EQHLPDDDKTPMSERLDD). The chain crosses the membrane as a helical span at residues 136–155 (TEPYFIGIFCFEAGIKIIAL). Residues 156-167 (GFAFHKGSYLRN) are Cytoplasmic-facing. Residues 168–185 (GWNVMDFVVVLTGILATV) form a helical membrane-spanning segment. Topologically, residues 186–190 (GTEFD) are extracellular. Residues 191-209 (LRTLRAVRVLRPLKLVSGI) traverse the membrane as a helical segment. Topologically, residues 210–228 (PSLQVVLKSIMKAMIPLLQ) are cytoplasmic. Residues 229-248 (IGLLLFFAILIFAIIGLEFY) traverse the membrane as a helical segment. Residues 249 to 335 (MGKFHTTCFE…NSNDASGNTW (87 aa)) are Extracellular-facing. N-linked (GlcNAc...) asparagine glycosylation occurs at N283. E318 lines the Ca(2+) pocket. Residues 336–360 (NWLYFIPLIIIGSFFMLNLVLGVLS) form a helical membrane-spanning segment. The Cytoplasmic portion of the chain corresponds to 361–487 (GEFAKERERV…FYIRRMVKTQ (127 aa)). The interval 383 to 400 (QQIERELNGYMEWISKAE) is binding to the beta subunit. Position 409 is a phosphothreonine (T409). Phosphoserine is present on residues S448 and S451. The stretch at 473 to 717 (ERRMRFYIRR…VFLAIAVDNL (245 aa)) is one II repeat. Residues 488-506 (AFYWTVLSLVALNTLCVAI) traverse the membrane as a helical segment. Topologically, residues 507–521 (VHYNQPEWLSDFLYY) are extracellular. Residues 522-541 (AEFIFLGLFMSEMFIKMYGL) form a helical membrane-spanning segment. The Cytoplasmic portion of the chain corresponds to 542–549 (GTRPYFHS). A helical transmembrane segment spans residues 550 to 568 (SFNCFDCGVIIGSIFEVIW). Residues 569–578 (AVIKPGTSFG) lie on the Extracellular side of the membrane. A helical membrane pass occupies residues 579-597 (ISVLRALRLLRIFKVTKYW). Residues 598–616 (ASLRNLVVSLLNSMKSIIS) lie on the Cytoplasmic side of the membrane. The helical transmembrane segment at 617-636 (LLFLLFLFIVVFALLGMQLF) threads the bilayer. The Extracellular segment spans residues 637 to 689 (GGQFNFDEGTPPTNFDTFPAAIMTVFQILTGEDWNEVMYDGIKSQGGVQGGMV). E668 contributes to the Ca(2+) binding site. Residues 690–714 (FSIYFIVLTLFGNYTLLNVFLAIAV) form a helical membrane-spanning segment. Over 715–1253 (DNLANAQELT…RLCHYILNLR (539 aa)) the chain is Cytoplasmic. Phosphoserine is present on residues S750, S753, and S790. Residues 819 to 1229 (HLDRPLVVDP…GEDGPKPMPP (411 aa)) form a disordered region. 3 stretches are compositionally biased toward basic and acidic residues: residues 893–912 (ELSR…REGG), 922–931 (EAERGKAGDP), and 969–996 (RPGE…RSGE). Over residues 1053-1065 (PNLSTTRPIQQDL) the composition is skewed to polar residues. Phosphoserine is present on residues S1091 and S1104. Over residues 1110 to 1140 (SSTDPAGPTPATAANPQNSTASRRTPNNPGN) the composition is skewed to low complexity. The span at 1151-1168 (ENSLIVTNPSTAQTNSAK) shows a compositional bias: polar residues. The segment covering 1204–1214 (LPKKEDEKKEE) has biased composition (basic and acidic residues). Residues 1240–1523 (NPLRRLCHYI…IFVALIIITF (284 aa)) form an III repeat. A helical membrane pass occupies residues 1254–1272 (YFEMCILMVIAMSSIALAA). The Extracellular segment spans residues 1273-1288 (EDPVQPNAPRNNVLRY). Residues 1289–1308 (FDYVFTGVFTFEMVIKMIDL) traverse the membrane as a helical segment. Topologically, residues 1309-1320 (GLVLHQGAYFRD) are cytoplasmic. Residues 1321 to 1339 (LWNILDFIVVSGALVAFAF) traverse the membrane as a helical segment. Over 1340–1350 (TGNSKGKDINT) the chain is Extracellular. A helical membrane pass occupies residues 1351–1369 (IKSLRVLRVLRPLKTIKRL). At 1370–1388 (PKLKAVFDCVVNSLKNVFN) the chain is on the cytoplasmic side. The helical transmembrane segment at 1389–1408 (ILIVYMLFMFIFAVVAVQLF) threads the bilayer. Residues 1409-1495 (KGKFFHCTDE…QGPSPGYRME (87 aa)) lie on the Extracellular side of the membrane. E1469 serves as a coordination point for Ca(2+). The helical transmembrane segment at 1496 to 1520 (MSIFYVVYFVVFPFFFVNIFVALII) threads the bilayer. The Cytoplasmic segment spans residues 1521–1575 (ITFQEQGDKMMEEYSLEKNERACIDFAISAKPLTRHMPQNKQSFQYRMWQFVVSP). An IV repeat occupies 1560 to 1823 (NKQSFQYRMW…LFVAVIMDNF (264 aa)). Residues 1576–1604 (PFEYTIMAMIALNTIVLMMKFYGASVAYD) form a helical membrane-spanning segment. Over 1605-1609 (NALKV) the chain is Extracellular. The helical transmembrane segment at 1610-1629 (FNIVFTSLFSLECLLKVLAF) threads the bilayer. Topologically, residues 1630 to 1637 (GILNYFRD) are cytoplasmic. The chain crosses the membrane as a helical span at residues 1638–1656 (AWNIFDFVTVLGSITDILV). Over 1657–1665 (TEFGNNFIN) the chain is Extracellular. A glycan (N-linked (GlcNAc...) asparagine) is linked at N1665. The chain crosses the membrane as a helical span at residues 1666-1684 (LSFLRLFRAARLIKLLRQG). At 1685-1703 (YTIRILLWTFVQSFKALPY) the chain is on the cytoplasmic side. A helical membrane pass occupies residues 1704 to 1723 (VCLLIAMLFFIYAIIGMQVF). The Extracellular portion of the chain corresponds to 1724–1795 (GNIGIDMEDE…ILTPECGNEF (72 aa)). A helical membrane pass occupies residues 1796–1820 (AYFYFVSFIFLCSFLMLNLFVAVIM). Over 1821–2424 (DNFEYLTRDS…GGPRASAPSP (604 aa)) the chain is Cytoplasmic. The residue at position 1993 (T1993) is a Phosphothreonine. The interval 1997–2424 (FQRMEPPPDE…GGPRASAPSP (428 aa)) is disordered. Residues 2037 to 2053 (SWVTQRAQEMFQKTGTW) show a composition bias toward polar residues. Phosphoserine occurs at positions 2054, 2072, 2084, 2086, 2127, and 2148. The segment covering 2074-2090 (EMREMSQDGYSDSEHCL) has biased composition (basic and acidic residues). Composition is skewed to basic and acidic residues over residues 2142 to 2159 (RRLD…ENQR) and 2200 to 2210 (PSREREQERGR). Positions 2211-2229 (PKDRKHRPHHHHHHHHHPG) are enriched in basic residues. The segment covering 2249–2262 (VARVRPARAPALAH) has biased composition (low complexity). Positions 2280–2305 (RRARRPRPRQRRRPRRRRGGGGRALR) are enriched in basic residues.

This sequence belongs to the calcium channel alpha-1 subunit (TC 1.A.1.11) family. CACNA1A subfamily. In terms of assembly, voltage-dependent calcium channels are multisubunit complexes, consisting of alpha-1, alpha-2, beta and delta subunits in a 1:1:1:1 ratio. The channel activity is directed by the pore-forming and voltage-sensitive alpha-1 subunit. In many cases, this subunit is sufficient to generate voltage-sensitive calcium channel activity. The auxiliary subunits beta and alpha-2/delta linked by a disulfide bridge regulate the channel activity. Interacts with CABP1. Interacts with the spider omega-agatoxin-IVA (AC P30288). Interacts with TSPOAP1. In terms of tissue distribution, brain specific. Purkinje cells contain predominantly P-type VSCC, the Q-type being a prominent calcium current in cerebellar granule cells.

Its subcellular location is the cell membrane. The catalysed reaction is Ca(2+)(in) = Ca(2+)(out). Its function is as follows. Voltage-sensitive calcium channels (VSCC) mediate the entry of calcium ions into excitable cells and are also involved in a variety of calcium-dependent processes, including muscle contraction, hormone or neurotransmitter release, gene expression, cell motility, cell division and cell death. The isoform alpha-1A gives rise to P and/or Q-type calcium currents. P/Q-type calcium channels belong to the 'high-voltage activated' (HVA) group and are specifically blocked by the spider omega-agatoxin-IVA (AC P54282). They are however insensitive to dihydropyridines (DHP). This is Voltage-dependent P/Q-type calcium channel subunit alpha-1A (CACNA1A) from Oryctolagus cuniculus (Rabbit).